The sequence spans 1726 residues: Protein Shroom2 (1726 aa).

One can recognise a PDZ domain in the interval 79–159; sequence AGGCYSYWRG…ILKMIVKRRN (81 aa). Disordered stretches follow at residues 294–373, 425–451, 657–676, and 697–785; these read DNTK…RSDS, RTVA…LSPY, FSQL…DYSW, and EGRN…STYR. The span at 318-328 shows a compositional bias: polar residues; that stretch reads VLQSTSINETS. Over residues 329–338 the composition is skewed to basic and acidic residues; that stretch reads KIQRTEDNTE. Over residues 657 to 667 the composition is skewed to basic and acidic residues; the sequence is FSQLDHSEKGS. Polar residues-rich tracts occupy residues 746–755 and 769–785; these read SKSTAALTES and LESM…STYR. The region spanning 788–877 is the ASD1 domain; that stretch reads LQEAQARVLR…SEPEKINEVG (90 aa). 6 disordered regions span residues 913–968, 1007–1080, 1092–1120, 1166–1240, 1269–1299, and 1471–1499; these read PKVP…DKVT, LDAD…QCGA, KWKP…GTLP, FKKR…KNPS, SSKS…DKPP, and AQQR…VPSA. Low complexity predominate over residues 917–926; that stretch reads PKVVSSSQSE. Residues 936–948 show a composition bias toward basic and acidic residues; the sequence is DYAKSSEGQESKR. Polar residues-rich tracts occupy residues 1054 to 1070 and 1104 to 1119; these read NSNS…SPTR and ETSN…SGTL. A compositionally biased stretch (low complexity) spans 1191-1205; it reads SSSSLATSSESLLTA. The segment covering 1209 to 1235 has biased composition (polar residues); it reads RAQSYSPSSQDTFPPQSLQKQSPSTYP. Residues 1427–1721 enclose the ASD2 domain; it reads EELVREIVDK…QLKCLTDSLP (295 aa).

The protein belongs to the shroom family. Interacts with F-actin.

The protein localises to the apical cell membrane. Its subcellular location is the cell junction. The protein resides in the tight junction. It localises to the cytoplasm. It is found in the cytoskeleton. May be involved in endothelial cell morphology changes during cell spreading. Required for eye pigmentation. In the retinal pigment epithelium, regulates the biogenesis of melanosomes and promotes their association with the apical cell surface by inducing gamma-tubulin redistribution. This chain is Protein Shroom2 (shroom2), found in Xenopus tropicalis (Western clawed frog).